A 166-amino-acid polypeptide reads, in one-letter code: Protein YciF (166 aa).

As to quaternary structure, homodimer.

The polypeptide is Protein YciF (yciF) (Escherichia coli (strain K12)).